We begin with the raw amino-acid sequence, 428 residues long: Aerobic C4-dicarboxylate transport protein (428 aa).

9 consecutive transmembrane segments (helical) span residues Leu-5 to Tyr-27, Met-47 to Met-64, Ala-77 to Val-99, Val-141 to Ala-163, Val-184 to Phe-206, Leu-216 to Leu-238, Val-289 to Met-311, Ile-326 to Gly-348, and Val-353 to Ile-375.

Belongs to the dicarboxylate/amino acid:cation symporter (DAACS) (TC 2.A.23) family.

It localises to the cell inner membrane. In terms of biological role, responsible for the transport of dicarboxylates such as succinate, fumarate, and malate from the periplasm across the membrane. This Salmonella typhi protein is Aerobic C4-dicarboxylate transport protein.